We begin with the raw amino-acid sequence, 290 residues long: uncharacterized protein (290 aa).

The protein belongs to the glycosyltransferase 2 family.

This is an uncharacterized protein from Methanocaldococcus jannaschii (strain ATCC 43067 / DSM 2661 / JAL-1 / JCM 10045 / NBRC 100440) (Methanococcus jannaschii).